A 617-amino-acid chain; its full sequence is E3 ubiquitin-protein ligase synoviolin (617 aa).

Residues 1–4 (MFRT) are Cytoplasmic-facing. Residues 1 to 84 (MFRTAVMMAA…EHLLERSWYA (84 aa)) form a necessary and sufficient for SEL1L interaction region. The tract at residues 1–251 (MFRTAVMMAA…LFAIRPMYLA (251 aa)) is involved in FAM8A1 interaction. Residues 5–25 (AVMMAASLALTGAVVAHAYYL) traverse the membrane as a helical segment. Residues 26-41 (KHQFYPTVVYLTKSSP) lie on the Lumenal side of the membrane. The helical transmembrane segment at 42–62 (SMAVLYIQAFVLVFLLGKVMG) threads the bilayer. Topologically, residues 63–98 (KVFFGQLRAAEMEHLLERSWYAVTETCLAFTVFRDD) are cytoplasmic. A helical membrane pass occupies residues 99–119 (FSPRFVALFTLLLFLKCFHWL). The Lumenal segment spans residues 120–140 (AEDRVDFMERSPNISWLFHCR). The helical transmembrane segment at 141 to 161 (IVSLMFLLGILDFLFVSHAYH) threads the bilayer. Residues 162 to 169 (SILTRGAS) lie on the Cytoplasmic side of the membrane. A helical membrane pass occupies residues 170 to 190 (VQLVFGFEYAILMTMVLTIFI). Residues 191–224 (KYVLHSVDLQSENPWDNKAVYMLYTELFTGFIKV) lie on the Lumenal side of the membrane. A helical transmembrane segment spans residues 225–245 (LLYMAFMTIMIKVHTFPLFAI). The tract at residues 236–270 (KVHTFPLFAIRPMYLAMRQFKKAVTDAIMSRRAIR) is interaction with p53/TP53. The Cytoplasmic segment spans residues 246–617 (RPMYLAMRQF…LQKLESPVAH (372 aa)). 8 residues coordinate Zn(2+): Cys-291, Cys-294, Cys-307, His-309, His-312, Cys-315, Cys-326, and Cys-329. The RING-type; atypical zinc finger occupies 291 to 330 (CIICREEMVTGAKRLPCNHIFHTSCLRSWFQRQQTCPTCR). 3 disordered regions span residues 337–375 (SLPA…GLLP), 393–453 (PVPP…PAPG), and 535–617 (RPAT…PVAH). Residues 341–375 (QSPPPPEPADQGPPPAPHPPPLLPQPPNFPQGLLP) show a composition bias toward pro residues. Positions 417–451 (PSGAATTTAAGTSATAASATASGPGSGSAPEAGPA) are enriched in low complexity. Residues 480 to 535 (GFAGLTPEELRALEGHERQHLEARLQSLRNIHTLLDAAMLQINQYLTVLASLGPPR) form an HAF-H domain; necessary to form higher-order Hrd1 complexes region. The segment covering 537–569 (ATSVNSTEETATTVVAAASSTSIPSSEATTPTP) has biased composition (low complexity). Positions 591–600 (EMPEDGEPDA) are enriched in acidic residues. Ser-613 is subject to Phosphoserine.

This sequence belongs to the HRD1 family. As to quaternary structure, homodimer. Interacts with p53/TP53. Interacts with HTT. Component of the HRD1 complex, which comprises at least SYNV1/HRD1, DERL1/2, FAM8A1, HERPUD1/HERP, OS9, SEL1L and UBE2J1. FAM8A1 is stabilized by interaction with SYNV1, which prevents its proteasomal degradation. OS9 and UBE2J1 recruitment to the complex may be mediated by SEL1L. SYNV1 assembles with SEL1L and FAM8A1 through its transmembrane domains, but interaction with its cytoplasmic domain is required to confer stability to FAM8A1 and enhance recruitment of HERPUD1. The HRD1 complex also associates with VIMP and may transfer misfolded proteins from the endoplasmic reticulum to VCP. May form a complex with ERLEC1, HSPA5, OS9 and SEL1L. Interacts with VCP. Interacts with UBXN6. Interacts with BAG6. Interacts with NFE2L1. Interacts (via N-terminus) with components of the pre-B cell receptor, including IGLL1 and VPREB1. Interacts with CREB3L3; this interaction leads to CREB3L3 ubiquitination and proteasomal degradation. Not N-glycosylated. Post-translationally, auto-ubiquitinated. Deubiquitinated by USP19. Ubiquitously expressed, with highest levels in liver and kidney (at protein level). Up-regulated in synovial tissues from patients with rheumatoid arthritis (at protein level).

The protein localises to the endoplasmic reticulum membrane. It catalyses the reaction S-ubiquitinyl-[E2 ubiquitin-conjugating enzyme]-L-cysteine + [acceptor protein]-L-lysine = [E2 ubiquitin-conjugating enzyme]-L-cysteine + N(6)-ubiquitinyl-[acceptor protein]-L-lysine.. Its pathway is protein modification; protein ubiquitination. E3 ubiquitin-protein ligase which accepts ubiquitin specifically from endoplasmic reticulum-associated UBC7 E2 ligase and transfers it to substrates, promoting their degradation. Component of the endoplasmic reticulum quality control (ERQC) system also called ER-associated degradation (ERAD) involved in ubiquitin-dependent degradation of misfolded endoplasmic reticulum proteins. Also promotes the degradation of normal but naturally short-lived proteins such as SGK. Protects cells from ER stress-induced apoptosis. Protects neurons from apoptosis induced by polyglutamine-expanded huntingtin (HTT) or unfolded GPR37 by promoting their degradation. Sequesters p53/TP53 in the cytoplasm and promotes its degradation, thereby negatively regulating its biological function in transcription, cell cycle regulation and apoptosis. Mediates the ubiquitination and subsequent degradation of cytoplasmic NFE2L1. During the early stage of B cell development, required for degradation of the pre-B cell receptor (pre-BCR) complex, hence supporting further differentiation into mature B cells. The polypeptide is E3 ubiquitin-protein ligase synoviolin (Homo sapiens (Human)).